We begin with the raw amino-acid sequence, 180 residues long: Putative 3-methyladenine DNA glycosylase (180 aa).

It belongs to the DNA glycosylase MPG family.

The chain is Putative 3-methyladenine DNA glycosylase from Wolbachia pipientis wMel.